Here is a 631-residue protein sequence, read N- to C-terminus: MADPSAFYEPEEDELLSQLAIPIQNYQPLSEGDEYRRLQQLEQHAYAQQTAMAQEQEMEQLAVLELIPEDVKRFLVMFHQAILENDLPTITSMYESGWNKLTQAHYLNNEWPEAELIAPLVGNDQVFLTLYRELYFRHVYARLQPTIDDRFQSYENICELFNYLLNSEGPVPLDLPIQWLWDMLDEFVYQFTSFSHWRSSPKAKTEEELEMLAESPNIWSSYSVLNVLYSLVQKSQINEQLKAERAGKSVEEVTEVAGEYGSKPLYKNLGYFSLICLLHVHVLLGDPTLALQTMENVDLGNAAFLTRITACHVTTYYHVGCAYMALGRWPDAIKTFVSVLIFFIRMKQYHTRSYQYGSIAKTCERMYALLAICTTLSPGPSDENIMTIVKEHYGDQLAILQRGGPEALEAFKDLYLQACPKYLNVNPPPYEDASALEAWLANPPADATQRHLELFLSDVQAVQGVNGMRNLLKLYTSIDAAKLAAFSVSGEEEGEEEVLQQLMVLKSASSTYGRGQAETTLLDGERKVTNNLDFTIDGTMVHVEETTSHRRYAGFFIRNAEHAQRALTSIKSAPLPVRKPASSSAPAPATTAAPISKSGESAAPAPAEAPAAPEKKAGTWVPKSRQARIAA.

A PCI domain is found at 335-526; sequence TFVSVLIFFI…AETTLLDGER (192 aa). Residues 571–631 are disordered; sequence KSAPLPVRKP…PKSRQARIAA (61 aa). The span at 580-612 shows a compositional bias: low complexity; sequence PASSSAPAPATTAAPISKSGESAAPAPAEAPAA.

The protein belongs to the eIF-3 subunit L family. In terms of assembly, component of the eukaryotic translation initiation factor 3 (eIF-3) complex.

It is found in the cytoplasm. Component of the eukaryotic translation initiation factor 3 (eIF-3) complex, which is involved in protein synthesis of a specialized repertoire of mRNAs and, together with other initiation factors, stimulates binding of mRNA and methionyl-tRNAi to the 40S ribosome. The eIF-3 complex specifically targets and initiates translation of a subset of mRNAs involved in cell proliferation. This is Eukaryotic translation initiation factor 3 subunit L from Cryptococcus neoformans var. neoformans serotype D (strain B-3501A) (Filobasidiella neoformans).